We begin with the raw amino-acid sequence, 370 residues long: Probable butyrate kinase (370 aa).

Belongs to the acetokinase family.

It localises to the cytoplasm. The enzyme catalyses butanoate + ATP = butanoyl phosphate + ADP. The polypeptide is Probable butyrate kinase (Elusimicrobium minutum (strain Pei191)).